We begin with the raw amino-acid sequence, 485 residues long: Protein DETOXIFICATION 8 (485 aa).

The tract at residues Met1–Gln26 is disordered. The next 12 membrane-spanning stretches (helical) occupy residues Phe41–Ile61, Ala74–Ala94, Tyr118–Met138, Ser159–Phe179, Leu188–Tyr208, Phe212–Leu232, Leu263–Leu283, Val297–Ala317, Ala338–Tyr358, Ile381–Val401, Ala414–Val434, and Trp442–Phe462.

Belongs to the multi antimicrobial extrusion (MATE) (TC 2.A.66.1) family.

It localises to the membrane. The protein is Protein DETOXIFICATION 8 of Arabidopsis thaliana (Mouse-ear cress).